We begin with the raw amino-acid sequence, 221 residues long: HTH-type transcriptional regulator McbR (221 aa).

The HTH gntR-type domain maps to 10–77 (VSLTLQVEND…PAQAFTVPEV (68 aa)). A DNA-binding region (H-T-H motif) is located at residues 37-56 (TKNLAEQLGMSITPVREALL).

Functionally, important for biofilm formation. Represses expression of McbA by binding to its promoter region, which prevents colanic acid overproduction and mucoidy. This chain is HTH-type transcriptional regulator McbR (mcbR), found in Escherichia coli (strain K12).